Consider the following 953-residue polypeptide: TPR repeat-containing protein ZIP4 (953 aa).

Residues 129–162 form a TPR 1 repeat; it reads ASFFHRSGLAWLDLGRVDLASACFEKATPLVSAA. The interval 248–269 is disordered; that stretch reads AASPSSSSPRTPPYGGATPKTP. 2 TPR repeats span residues 432–465 and 473–506; these read HALL…VSRD and ADCF…EPNI. Residues 925–953 form a disordered region; it reads VSGDEPDECSQEEAPKASISGSMSQPVLV. Residues 943–953 show a composition bias toward polar residues; that stretch reads ISGSMSQPVLV.

Interacts with HEI10 and SHOC1.

It localises to the nucleus. The protein localises to the chromosome. Required for crossover formation, complete synapsis of homologous chromosomes and bivalent formation during meiosis. Is specific to recombination events resulting in interference-sensitive crossovers (class I meiotic crossover) and works cooperatively with MER3 to promote crossovers. In Oryza sativa subsp. japonica (Rice), this protein is TPR repeat-containing protein ZIP4.